We begin with the raw amino-acid sequence, 366 residues long: Ribosomal RNA large subunit methyltransferase M (366 aa).

Residues serine 188, 221-224 (CPGG), aspartate 240, aspartate 260, and aspartate 277 each bind S-adenosyl-L-methionine. The active-site Proton acceptor is lysine 306.

The protein belongs to the class I-like SAM-binding methyltransferase superfamily. RNA methyltransferase RlmE family. RlmM subfamily. Monomer.

Its subcellular location is the cytoplasm. It carries out the reaction cytidine(2498) in 23S rRNA + S-adenosyl-L-methionine = 2'-O-methylcytidine(2498) in 23S rRNA + S-adenosyl-L-homocysteine + H(+). Its function is as follows. Catalyzes the 2'-O-methylation at nucleotide C2498 in 23S rRNA. The chain is Ribosomal RNA large subunit methyltransferase M from Shigella sonnei (strain Ss046).